Here is a 65-residue protein sequence, read N- to C-terminus: MNINDIRGLSDTEIKKKLEDAHKELFELRLKLSTRQLVNHRELPRVKNDIARILTVMRERELQIR.

Belongs to the universal ribosomal protein uL29 family.

This Dehalococcoides mccartyi (strain ATCC BAA-2266 / KCTC 15142 / 195) (Dehalococcoides ethenogenes (strain 195)) protein is Large ribosomal subunit protein uL29.